A 109-amino-acid polypeptide reads, in one-letter code: U4-lycotoxin-Ls1a (109 aa).

An N-terminal signal peptide occupies residues 1-22; the sequence is MKVLVLFSVLFLTLFSYSSTEA. A propeptide spanning residues 23–44 is cleaved from the precursor; that stretch reads IDELDSDAEEDMLSLMANEQVR. Residues 45–88 form a knottin domain region; it reads AKACTPRLHDCSHDRHSCCRGELFKDVCYCFYPEGEDKTEVCSC. Intrachain disulfides connect Cys-48–Cys-63, Cys-55–Cys-72, Cys-62–Cys-88, and Cys-74–Cys-86. The interval 89–108 is linear cationic cytotoxin domain; the sequence is QQPKSHKYIEKVVDKAKTVV.

This sequence belongs to the neurotoxin 19 (CSTX) family. 05 (U4-Lctx) subfamily. In terms of tissue distribution, expressed by the venom gland.

It is found in the secreted. Enhances the high-affinity desensitization of human P2RX3 purinoceptors. In Lycosa singoriensis (Wolf spider), this protein is U4-lycotoxin-Ls1a.